Reading from the N-terminus, the 811-residue chain is Zinc finger protein 839 (811 aa).

The C2H2-type zinc-finger motif lies at 197–222; sequence FKCQTCEKSYIGKGGLARHFKLNPGH. Disordered regions lie at residues 329–349, 455–555, and 612–654; these read QRRAAQLPGGPAAAGEQRASP, PDNL…NGSV, and ALEH…AEAG. Residues 476 to 485 are compositionally biased toward basic and acidic residues; sequence SSEKREREAA. Residues 501–510 show a composition bias toward polar residues; that stretch reads SNDTTESLAA.

The sequence is that of Zinc finger protein 839 (ZNF839) from Homo sapiens (Human).